Reading from the N-terminus, the 30-residue chain is Kalata-B10 (30 aa).

Positions 1 to 30 form a cross-link, cyclopeptide (Gly-Asp); sequence GLPTCGETCFGGTCNTPGCSCSSWPICTRD. 3 disulfide bridges follow: Cys5-Cys19, Cys9-Cys21, and Cys14-Cys27.

It belongs to the cyclotide family. Moebius subfamily. In terms of processing, this peptide occurs in both cyclic and linear forms. The linear form contains unmodified Trp-24, the cyclic peptide occurs in two forms with unmodified Trp-24, and with Trp-24 oxidized to form oxindolylalanine. Oxidation is enhanced by exposure to sunlight.

Probably participates in a plant defense mechanism. The chain is Kalata-B10 from Oldenlandia affinis.